A 258-amino-acid chain; its full sequence is uncharacterized protein (258 aa).

6 consecutive transmembrane segments (helical) span residues 24–44 (IPLFTVIVALLTIILGIVNIF), 70–90 (PLVHHGVISFILGLLGIFLLM), 100–120 (LCTIAMFFGFLEVIPAIAYLI), 130–150 (VYVGIGGWVYSLLAMYLLNLF), 157–177 (LLNLPQVVRMALALVAPVLGL), and 181–201 (FSITIVLHLTAVVISIIFSFA). Histidine 188 is an active-site residue.

It belongs to the peptidase S54 family.

It is found in the golgi apparatus membrane. This is an uncharacterized protein from Schizosaccharomyces pombe (strain 972 / ATCC 24843) (Fission yeast).